The chain runs to 1422 residues: Guanine nucleotide exchange factor subunit RIC1 (1422 aa).

WD repeat units lie at residues 64 to 103 and 304 to 343; these read TQFGSYKQAEWRPDSTMIAVSTANGYILFFHITSSRGDKY and NKTGAVKLIRWSPDNSAVIVTWEYGGLSLWSVFGAQLICT. 2 disordered regions span residues 442–462 and 986–1005; these read NPKYSSARAERMPRHEKSPFA and SGESETPPSTPTSQEPSSSG. Residues 449–460 are compositionally biased toward basic and acidic residues; the sequence is RAERMPRHEKSP. Residues Thr-991 and Thr-995 each carry the phosphothreonine modification. Residues Ser-1014, Ser-1016, Ser-1018, Ser-1036, and Ser-1171 each carry the phosphoserine modification. Residues 1021 to 1048 are disordered; the sequence is AENVPPGKFGLQKTLSMPTGPSGKRWSK. Disordered regions lie at residues 1179–1198 and 1355–1422; these read THRDTDRASSPGPQMQDAFL and DTFQ…CSVS. The segment covering 1378-1396 has biased composition (polar residues); the sequence is GSCSHGSISQSEPGSNNVV. Positions 1403 to 1412 are enriched in acidic residues; it reads TTQADEEEPL.

It belongs to the RIC1 family. Forms a complex with RGP1; the interaction enhances RAB6A GTPase activity. Interacts (via central domain) with RGP1. Interacts with RAB6A; the interaction is direct with a preference for RAB6A-GDP. Interacts (via C-terminus domain) with RAB33B; the interaction is direct with a preference for RAB33B-GTP. Interacts with GJA1. In terms of tissue distribution, expressed in the eye lens.

Its subcellular location is the cytoplasm. The protein resides in the cytosol. The protein localises to the membrane. Functionally, the RIC1-RGP1 complex acts as a guanine nucleotide exchange factor (GEF), which activates RAB6A by exchanging bound GDP for free GTP, and may thereby be required for efficient fusion of endosome-derived vesicles with the Golgi compartment. The RIC1-RGP1 complex participates in the recycling of mannose-6-phosphate receptors. Required for phosphorylation and localization of GJA1. Is a regulator of procollagen transport and secretion, and is required for correct cartilage morphogenesis and development of the craniofacial skeleton. This chain is Guanine nucleotide exchange factor subunit RIC1, found in Mus musculus (Mouse).